The following is a 38-amino-acid chain: Tyrosinase inhibitor (38 aa).

3 disulfides stabilise this stretch: cysteine 11-cysteine 25, cysteine 18-cysteine 29, and cysteine 24-cysteine 36. 3',4'-dihydroxyphenylalanine is present on tyrosine 32.

As to quaternary structure, monomer. In terms of processing, contains L-DOPA (3',4'-dihydroxyphenylalanine).

It localises to the secreted. Potent reversible, competitive inhibitor of tyrosinase (phenol oxidase) in the nanomolar range. The protein is Tyrosinase inhibitor of Musca domestica (House fly).